The primary structure comprises 262 residues: Carbohydrate deacetylase (262 aa).

His-129 provides a ligand contact to Mg(2+).

It belongs to the YdjC deacetylase family. Homodimer. The cofactor is Mg(2+).

In terms of biological role, probably catalyzes the deacetylation of acetylated carbohydrates an important step in the degradation of oligosaccharides. The sequence is that of Carbohydrate deacetylase from Enterococcus faecalis (strain ATCC 700802 / V583).